Reading from the N-terminus, the 498-residue chain is Interferon regulatory factor 5 (498 aa).

At Thr-10 the chain carries Phosphothreonine. The short motif at 12-18 (PRRVRLK) is the Nuclear localization signal element. Residues 14–122 (RVRLKPWLVA…QPYKIYEVCS (109 aa)) constitute a DNA-binding region (IRF tryptophan pentad repeat). The disordered stretch occupies residues 121-207 (CSNGPAPTDS…SPLAPPPGNP (87 aa)). The Nuclear export signal signature appears at 150 to 160 (LQRMLPSLSLT). At Ser-158 the chain carries Phosphoserine; by TBK1. A compositionally biased stretch (pro residues) spans 168–206 (TLQPPTLRPPTLQPPTLQPPVVLGPPAPDPSPLAPPPGN). At Ser-293 the chain carries Phosphoserine; by TBK1. Ser-301 carries the phosphoserine modification. Residues Lys-411 and Lys-412 each participate in a glycyl lysine isopeptide (Lys-Gly) (interchain with G-Cter in ubiquitin) cross-link. 4 positions are modified to phosphoserine: Ser-431, Ser-435, Ser-437, and Ser-440. Position 446 is a phosphoserine; by IKKB (Ser-446). The tract at residues 478 to 498 (PPGAGLGVGQGPWPMHPAGMQ) is disordered.

The protein belongs to the IRF family. In terms of assembly, homodimer, when phosphorylated. Interacts with TASL (via pLxIS motif); interaction takes place downstream of TLR7, TLR8 or TLR9, leading to its activation. Interacts with MYD88 and TRAF6. Post-translationally, phosphorylation of serine and threonine residues by IKBKB in a C-terminal autoinhibitory region, stimulates dimerization, transport into the nucleus, assembly with the coactivator CBP/EP300 and initiation of transcription. In terms of processing, 'Lys-63'-linked polyubiquitination by TRAF6 is required for activation.

It is found in the cytoplasm. The protein resides in the nucleus. With respect to regulation, maintained as a monomer in an autoinhibited state. Phosphorylation and activation follow the following steps: innate adapter protein TASL recruits IRF5, thereby licensing IRF5 for phosphorylation by IKBKB. Phosphorylated IRF5 dissociates from the adapter proteins, dimerizes, and then enters the nucleus to induce IFNs. Its activity is regulated as follows. (Microbial infection) Activated upon coronavirus SARS-CoV-2 infection. In terms of biological role, transcription factor that plays a critical role in innate immunity by activating expression of type I interferon (IFN) IFNA and INFB and inflammatory cytokines downstream of endolysosomal toll-like receptors TLR7, TLR8 and TLR9. Regulates the transcription of type I IFN genes (IFN-alpha and IFN-beta) and IFN-stimulated genes (ISG) by binding to an interferon-stimulated response element (ISRE) in their promoters. Can efficiently activate both the IFN-beta (IFNB) and the IFN-alpha (IFNA) genes and mediate their induction downstream of the TLR-activated, MyD88-dependent pathway. Key transcription factor regulating the IFN response during SARS-CoV-2 infection. This Homo sapiens (Human) protein is Interferon regulatory factor 5.